A 440-amino-acid polypeptide reads, in one-letter code: Tubby-like F-box protein 13 (440 aa).

In terms of domain architecture, F-box spans 51–106; sequence SCWASLPPELLRDIIERLEESEATWPSRKHVVACAGVCRTWREMCKEIVKNPELCG.

It belongs to the TUB family. Ubiquitous.

In Oryza sativa subsp. japonica (Rice), this protein is Tubby-like F-box protein 13 (TULP13).